A 324-amino-acid chain; its full sequence is tRNA pseudouridine synthase B (324 aa).

Asp-49 serves as the catalytic Nucleophile. The disordered stretch occupies residues 87–107 (RSTDDLEGQPTKTSDKRPSRE).

The protein belongs to the pseudouridine synthase TruB family. Type 1 subfamily.

The catalysed reaction is uridine(55) in tRNA = pseudouridine(55) in tRNA. Functionally, responsible for synthesis of pseudouridine from uracil-55 in the psi GC loop of transfer RNAs. The sequence is that of tRNA pseudouridine synthase B from Brucella melitensis biotype 1 (strain ATCC 23456 / CCUG 17765 / NCTC 10094 / 16M).